Reading from the N-terminus, the 127-residue chain is Large ribosomal subunit protein bL19 (127 aa).

This sequence belongs to the bacterial ribosomal protein bL19 family.

In terms of biological role, this protein is located at the 30S-50S ribosomal subunit interface and may play a role in the structure and function of the aminoacyl-tRNA binding site. The polypeptide is Large ribosomal subunit protein bL19 (Paraburkholderia phymatum (strain DSM 17167 / CIP 108236 / LMG 21445 / STM815) (Burkholderia phymatum)).